Here is a 116-residue protein sequence, read N- to C-terminus: MHEITLCQRALELIEQQAAKHGAKRVTGVWLKIGAFSCVETSSLAFCFDLVCRGSVAEGCKLHLEEQEAECWCETCQQYVTLLTQRVRRCPQCHGDMLQIVADDGLQIRRIEIDQE.

Residue His2 participates in Ni(2+) binding. Cys73, Cys76, Cys90, and Cys93 together coordinate Zn(2+).

Belongs to the HypA/HybF family.

In terms of biological role, involved in the maturation of [NiFe] hydrogenases. Required for nickel insertion into the metal center of the hydrogenase. This chain is Hydrogenase maturation factor HypA, found in Escherichia coli O157:H7.